A 178-amino-acid chain; its full sequence is ATP-dependent protease subunit HslV (178 aa).

Residue T7 is part of the active site. G162, C165, and T168 together coordinate Na(+).

Belongs to the peptidase T1B family. HslV subfamily. As to quaternary structure, a double ring-shaped homohexamer of HslV is capped on each side by a ring-shaped HslU homohexamer. The assembly of the HslU/HslV complex is dependent on binding of ATP.

The protein resides in the cytoplasm. It carries out the reaction ATP-dependent cleavage of peptide bonds with broad specificity.. With respect to regulation, allosterically activated by HslU binding. Functionally, protease subunit of a proteasome-like degradation complex believed to be a general protein degrading machinery. The polypeptide is ATP-dependent protease subunit HslV (Dechloromonas aromatica (strain RCB)).